The sequence spans 330 residues: 5'-AMP-activated protein kinase subunit gamma-1 (330 aa).

Residues 1 to 13 (METVTSSDSSSAV) are compositionally biased toward polar residues. The disordered stretch occupies residues 1-26 (METVTSSDSSSAVENEHPQDTPESNN). CBS domains are found at residues 43–103 (PTSS…KSAL), 125–187 (SFKP…PKPE), and 198–260 (IGTY…NLDV). ADP is bound by residues Arg70, 85-90 (MLTITD), Val130, 151-152 (HR), and Lys170. AMP contacts are provided by residues Arg70, 85 to 90 (MLTITD), Val130, His151, 151 to 152 (HR), Lys170, Thr200, Ala205, 226 to 227 (SA), and 242 to 245 (SKFD). ATP-binding positions include Arg70, 85–90 (MLTITD), Val130, 151–152 (HR), Arg152, and Lys170. Positions 138 to 159 (LFDAVSSLIRNKIHRLPVIDPE) match the AMPK pseudosubstrate motif. ADP is bound at residue 242–245 (SKFD). Residue 242–245 (SKFD) participates in ATP binding. At Ser261 the chain carries Phosphoserine; by ULK1. At Thr263 the chain carries Phosphothreonine; by ULK1. ADP is bound at residue Arg269. Arg269 lines the AMP pocket. Arg269 lines the ATP pocket. Ser270 carries the phosphoserine; by ULK1 modification. The CBS 4 domain occupies 272–329 (YFEGVLKCYLHETLETIINRLVEAEVHRLVVVDENDVVKGIVSLSDILQALVLTGGEK). ADP-binding positions include Leu277 and 298–299 (HR). Residues Leu277, His298, 298-299 (HR), and 314-317 (SLSD) each bind AMP. Residues Leu277 and 298 to 299 (HR) each bind ATP.

Belongs to the 5'-AMP-activated protein kinase gamma subunit family. As to quaternary structure, AMPK is a heterotrimer of an alpha catalytic subunit (PRKAA1 or PRKAA2), a beta (PRKAB1 or PRKAB2) and a gamma non-catalytic subunits (PRKAG1, PRKAG2 or PRKAG3). Interacts with FNIP1 and FNIP2. In terms of processing, phosphorylated by ULK1 and ULK2; leading to negatively regulate AMPK activity and suggesting the existence of a regulatory feedback loop between ULK1, ULK2 and AMPK. Post-translationally, glycosylated; O-GlcNAcylated by OGT, promoting the AMP-activated protein kinase (AMPK) activity.

In terms of biological role, AMP/ATP-binding subunit of AMP-activated protein kinase (AMPK), an energy sensor protein kinase that plays a key role in regulating cellular energy metabolism. In response to reduction of intracellular ATP levels, AMPK activates energy-producing pathways and inhibits energy-consuming processes: inhibits protein, carbohydrate and lipid biosynthesis, as well as cell growth and proliferation. AMPK acts via direct phosphorylation of metabolic enzymes, and by longer-term effects via phosphorylation of transcription regulators. Also acts as a regulator of cellular polarity by remodeling the actin cytoskeleton; probably by indirectly activating myosin. Gamma non-catalytic subunit mediates binding to AMP, ADP and ATP, leading to activate or inhibit AMPK: AMP-binding results in allosteric activation of alpha catalytic subunit (PRKAA1 or PRKAA2) both by inducing phosphorylation and preventing dephosphorylation of catalytic subunits. ADP also stimulates phosphorylation, without stimulating already phosphorylated catalytic subunit. ATP promotes dephosphorylation of catalytic subunit, rendering the AMPK enzyme inactive. In Sus scrofa (Pig), this protein is 5'-AMP-activated protein kinase subunit gamma-1 (PRKAG1).